The following is a 263-amino-acid chain: MRIFRPWRLRCPALHLPSLSVFPLRWKLPSLTTDKTMCKSVTTDEWKKVFYEKMEEAKPADSWDLIIDPNLKHNVLSPGWKQYVELHASGRFHCSWCWHTWQSPHLVILFHMFLDRAQRAGSVRMRVFKQLCYECGSARLDESSMLEENIEGLVDNLITSLREQCYGERGGQYRIHVASRQDNRRHRGEFCEACQEGIVHWKPSEKLLEEEATTYTFSRAPSPTKPQDETGSGWNFCSIPWCLFWATVLLLIIYLQLSFRSSV.

Residues 1–238 are Cytoplasmic-facing; it reads MRIFRPWRLR…ETGSGWNFCS (238 aa). The 3CxxC-type zinc finger occupies 88-197; the sequence is ASGRFHCSWC…GEFCEACQEG (110 aa). Residues 239 to 259 traverse the membrane as a helical segment; it reads IPWCLFWATVLLLIIYLQLSF. Residues 260–263 lie on the Extracellular side of the membrane; that stretch reads RSSV.

Belongs to the TMEM7 family. In terms of assembly, interacts with olfactory receptors.

It is found in the cell membrane. In terms of biological role, specifically promotes functional cell surface expression of olfactory receptors, but not of other GPCRs. This chain is Receptor-transporting protein 1 (RTP1), found in Macaca fascicularis (Crab-eating macaque).